A 423-amino-acid chain; its full sequence is GTPase ERA-like, chloroplastic (423 aa).

The transit peptide at 1–60 directs the protein to the chloroplast; it reads MELGLALRLVAPPPRLPCRALQPPPMPCFSPCAARRSRIRSSRLERRVGVVVSGGSMASL. One can recognise an Era-type G domain in the interval 124–294; sequence RSGYVAVLGK…KEWILSKLPL (171 aa). The interval 132–139 is G1; sequence GKPNVGKS. Residue 132-139 coordinates GTP; sequence GKPNVGKS. A G2 region spans residues 158 to 162; the sequence is QTTRH. The G3 stretch occupies residues 179 to 182; that stretch reads DTPG. GTP-binding positions include 179 to 183 and 244 to 247; these read DTPGV and NKKD. A G4 region spans residues 244–247; it reads NKKD. The tract at residues 273–275 is G5; the sequence is ISA. The 78-residue stretch at 325–402 folds into the KH type-2 domain; it reads YRQEIPYACQ…YLEIMVKVKE (78 aa).

This sequence belongs to the TRAFAC class TrmE-Era-EngA-EngB-Septin-like GTPase superfamily. Era GTPase family.

Its subcellular location is the plastid. The protein resides in the chloroplast stroma. The protein localises to the chloroplast nucleoid. Nuclear genome-encoded probable GTPase involved in ribosome biogenesis in chloroplasts. Plays a role in 16S rRNA maturation in plastids and may contribute to the assembly of the small (30S) ribosomal subunit. The protein is GTPase ERA-like, chloroplastic of Oryza sativa subsp. japonica (Rice).